Here is a 904-residue protein sequence, read N- to C-terminus: MESNSGEIEELPPPPPLPPNAEPIKTDDTKKLSKPKRALMARSGCGKKGQPIQLLTNHFKVSLKAADEFFHHYYVNLKYEDDRPVDGKGIGRKVLDKLQQTYASELANKDFAYDGEKSLFTIGALPQVNNEFTVVLEDFNTGKSSANGGSPGNDSPGNDRKRVRRPYQTKTFKVELNFAAKIPMSAIAQALRGQESENTQEAIRVIDIILRQHSAKQGCLLVRQSFFHNNPSNFVDLGGGVMGCRGFHSSFRATQSGLSLNIDVSTTMIVKPGPVVDFLLANQKVDHPNKIDWAKAKRALKNLRIKTSPANTEYKIVGLSERNCYEQMFTLKQRNGDGEPEGVEVSVYEYFVKNRGIELRYSGDFPCINVGKPKRPTYFPIELCSLVPLQRYTKALSTLQRSSLVEKSRQKPEERMSVLSDVLKRSNYDSEPMLNSCGISIARGFTQVAGRVLQAPKLKAGNGEDLFARNGRWNFNNKRLIKASSIEKWAVVNFSARCNIRDLVRDIIKCGGMKGIKVEDPFDVIEEDPSMRRAPAARRVDGMIDKMQKKLPGQPKFLLCVLAERKNSDIYGPWKRKCLAEFGIITQCVAPTRVNDQYITNVLLKINAKLGGLNSLLQIETSPSIPLVSKVPTIILGMDVSHGSPGQSDIPSIAAVVSSREWPLVSKYRASVRSQSPKLEMIDGLFKPQGAQEDDGLIRELLVDFYTSTGKRKPDQVIIFRDGVSESQFTQVLNIELDQIIEACKFLDENWSPKFTLIVAQKNHHTKFFVPGSQNNVPPGTVVDNAVCHPRNNDFYMCAHAGMIGTTRPTHYHILHDEIGFSADDLQELVHSLSYVYQRSTTAISVVAPICYAHLAAAQVSQFIKFDEMSETSSSHGGHTSAGSAPVPELPRLHNKVRSSMFFC.

2 disordered regions span residues 1-33 and 143-166; these read MESN…KKLS and KSSA…VRRP. Positions 11 to 21 are enriched in pro residues; that stretch reads LPPPPPLPPNA. The segment covering 144-156 has biased composition (low complexity); the sequence is SSANGGSPGNDSP. One can recognise a PAZ domain in the interval 274–388; it reads PVVDFLLANQ…FPIELCSLVP (115 aa). Positions 557–865 constitute a Piwi domain; it reads FLLCVLAERK…AAAQVSQFIK (309 aa). The tract at residues 871–890 is disordered; sequence ETSSSHGGHTSAGSAPVPEL. The span at 872–885 shows a compositional bias: low complexity; sequence TSSSHGGHTSAGSA.

Belongs to the argonaute family. Ago subfamily.

Its function is as follows. Probably involved in the RNA silencing pathway. May bind to short RNAs such as microRNAs (miRNAs) or short interfering RNAs (siRNAs), and represses the translation of mRNAs which are complementary to them. The chain is Protein argonaute 4A (AGO4A) from Oryza sativa subsp. japonica (Rice).